The sequence spans 101 residues: Movement protein (101 aa).

The helical transmembrane segment at 30 to 50 (EVAILSFVALICFYLLYLWVL) threads the bilayer. Residues 75 to 101 (VDRSNPIPNIPAPPSQGNPGPFVPGTG) form a disordered region.

The protein belongs to the mastrevirus movement protein family. As to quaternary structure, interacts with the capsid protein (CP). Part of a MP-CP-viral DNA complex.

It is found in the host membrane. Its function is as follows. Involved in the viral transport within, and between cells. The protein is Movement protein of Maize streak virus genotype A (isolate Kenya) (MSV).